A 251-amino-acid chain; its full sequence is Triosephosphate isomerase (251 aa).

9–11 (NWK) serves as a coordination point for substrate. The Electrophile role is filled by His-95. Glu-167 (proton acceptor) is an active-site residue. Substrate is bound by residues Gly-173, Ser-213, and 234–235 (GG).

The protein belongs to the triosephosphate isomerase family. Homodimer.

The protein localises to the cytoplasm. It catalyses the reaction D-glyceraldehyde 3-phosphate = dihydroxyacetone phosphate. It functions in the pathway carbohydrate biosynthesis; gluconeogenesis. It participates in carbohydrate degradation; glycolysis; D-glyceraldehyde 3-phosphate from glycerone phosphate: step 1/1. Its function is as follows. Involved in the gluconeogenesis. Catalyzes stereospecifically the conversion of dihydroxyacetone phosphate (DHAP) to D-glyceraldehyde-3-phosphate (G3P). The sequence is that of Triosephosphate isomerase from Pelobacter propionicus (strain DSM 2379 / NBRC 103807 / OttBd1).